Here is a 760-residue protein sequence, read N- to C-terminus: Serine/threonine-protein kinase dkf-1 (760 aa).

2 Phorbol-ester/DAG-type zinc fingers span residues 103 to 153 (PHVV…GIIV) and 194 to 244 (PHTL…PSNC). In terms of domain architecture, PH spans 316–444 (KNLEGWMIHF…QFIKESLQPP (129 aa)). A Protein kinase domain is found at 464 to 725 (VLSDKTLGSG…IEKCLEHGWL (262 aa)). ATP contacts are provided by residues 470–478 (LGSGQFGTV) and Lys-493. Asp-589 functions as the Proton acceptor in the catalytic mechanism. Thr-626 carries the phosphothreonine modification.

The protein belongs to the protein kinase superfamily. CAMK Ser/Thr protein kinase family. PKD subfamily. It depends on Mg(2+) as a cofactor. Post-translationally, prolonged phosphorylation at Thr-626 results in ubiquitination and degradation.

It localises to the cytoplasm. The protein resides in the membrane. It catalyses the reaction L-seryl-[protein] + ATP = O-phospho-L-seryl-[protein] + ADP + H(+). It carries out the reaction L-threonyl-[protein] + ATP = O-phospho-L-threonyl-[protein] + ADP + H(+). Its activity is regulated as follows. Activated by DAG and phorbol esters. Phorbol-ester/DAG-type domain 1 binds phorbol ester with high affinity and mediates accumulation at the cell periphery. Phorbol-ester/DAG-type domain 2 binds phorbol ester with low affinity but may mediate initial contact, resulting in a conformational change allowing previously occluded domain 1 to anchor the kinase. Phosphorylation on Thr-626 is then also required for activation and may also result in a further conformational change. Its function is as follows. Converts transient diacylglycerol (DAG) signals into prolonged physiological effects, independently of PKC. Role in the regulation of growth and neuromuscular control of movement. Involved in immune response to S.aureus bacterium by activating transcription factor hlh-30 downstream of phospholipase plc-1. In Caenorhabditis briggsae, this protein is Serine/threonine-protein kinase dkf-1.